The primary structure comprises 138 residues: ATP synthase epsilon chain (138 aa).

This sequence belongs to the ATPase epsilon chain family. F-type ATPases have 2 components, CF(1) - the catalytic core - and CF(0) - the membrane proton channel. CF(1) has five subunits: alpha(3), beta(3), gamma(1), delta(1), epsilon(1). CF(0) has three main subunits: a, b and c.

The protein localises to the cell inner membrane. Produces ATP from ADP in the presence of a proton gradient across the membrane. The polypeptide is ATP synthase epsilon chain (Ruthia magnifica subsp. Calyptogena magnifica).